Reading from the N-terminus, the 407-residue chain is Serine hydroxymethyltransferase (407 aa).

Residues Leu-117 and 121–123 (GHL) contribute to the (6S)-5,6,7,8-tetrahydrofolate site. N6-(pyridoxal phosphate)lysine is present on Lys-226. Glu-242 is a (6S)-5,6,7,8-tetrahydrofolate binding site.

It belongs to the SHMT family. In terms of assembly, homodimer. The cofactor is pyridoxal 5'-phosphate.

It localises to the cytoplasm. The enzyme catalyses (6R)-5,10-methylene-5,6,7,8-tetrahydrofolate + glycine + H2O = (6S)-5,6,7,8-tetrahydrofolate + L-serine. Its pathway is one-carbon metabolism; tetrahydrofolate interconversion. It participates in amino-acid biosynthesis; glycine biosynthesis; glycine from L-serine: step 1/1. Catalyzes the reversible interconversion of serine and glycine with tetrahydrofolate (THF) serving as the one-carbon carrier. This reaction serves as the major source of one-carbon groups required for the biosynthesis of purines, thymidylate, methionine, and other important biomolecules. Also exhibits THF-independent aldolase activity toward beta-hydroxyamino acids, producing glycine and aldehydes, via a retro-aldol mechanism. This chain is Serine hydroxymethyltransferase, found in Thermus thermophilus (strain ATCC BAA-163 / DSM 7039 / HB27).